The following is a 125-amino-acid chain: uncharacterized protein (125 aa).

This is an uncharacterized protein from Mycobacterium bovis (strain ATCC BAA-935 / AF2122/97).